We begin with the raw amino-acid sequence, 86 residues long: Beta-mammal/insect toxin To1 (86 aa).

A signal peptide spans 1–20; the sequence is MTRFVLFISCFFLIDMIVEC. Residues 22–84 enclose the LCN-type CS-alpha/beta domain; it reads KEGYLVGNDG…TWSSATNKCK (63 aa). 4 disulfide bridges follow: cysteine 32/cysteine 83, cysteine 36/cysteine 58, cysteine 44/cysteine 64, and cysteine 48/cysteine 66. At lysine 84 the chain carries Lysine amide.

This sequence belongs to the long (4 C-C) scorpion toxin superfamily. Sodium channel inhibitor family. Beta subfamily. Expressed by the venom gland.

Its subcellular location is the secreted. Its function is as follows. Beta toxin that show multiple effects. It enhances the open probability at more negative potentials of human Nav1.3/SCN3A and Nav1.6/SCN8A, of the insect channel BgNaV1 and of arachnid VdNaV1 channel. It promotes an important shift in slow inactivation processes as a function of the prepulse voltage in human Nav1.3/SCN3A and Nav1.6/SCN8A and a small shift in Nav1.1/SCN1A, Nav1.2/SCN2A and Nav1.4/SCN4A. Finally, it reduces the peak of sodium currents in Nav1.3/SCN3A (80% inhibition at 70 nM of toxin), Nav1.6/SCN8A (55.3%), Nav1.1/SCN1A (53.3%), Nav1.5/SCN5A (46.7%), Nav1.2/SCN2A (42.7%) and Nav1.4/SCN4A (20%) voltage-gated sodium channels. It has also been shown to affect the sodium current permeability of rat cerebellum granular cells in a partially reversible manner. In vivo, an intraperitoneal injection (20 ug) into mice produces excitability, respiratory problems, convulsions and death, within the first 30 minutes after injection. This Tityus obscurus (Amazonian scorpion) protein is Beta-mammal/insect toxin To1.